The primary structure comprises 114 residues: Somatostatin-1A (114 aa).

The N-terminal stretch at 1–24 is a signal peptide; the sequence is MLSTRIQCALALLSLALAVCSVSA. The propeptide occupies 25–88; that stretch reads APTDAKLRQL…KDEVRLELER (64 aa). A disulfide bond links Cys-103 and Cys-114.

The protein belongs to the somatostatin family.

It localises to the secreted. Somatostatin inhibits the release of somatotropin. The polypeptide is Somatostatin-1A (sst1a) (Carassius auratus (Goldfish)).